A 374-amino-acid chain; its full sequence is Glycerophosphodiester phosphodiesterase GDPD2 (374 aa).

The GP-PDE domain maps to 38-326; it reads FSVIGHRGIG…DFVEEIIEST (289 aa). The segment at 330-349 is disordered; sequence MIRPPPSSSPLPSPSKDDDV. Residues 332 to 342 show a composition bias toward pro residues; the sequence is RPPPSSSPLPS.

Belongs to the glycerophosphoryl diester phosphodiesterase family. Expressed in roots, shoots, flowers and siliques.

It carries out the reaction a sn-glycero-3-phosphodiester + H2O = an alcohol + sn-glycerol 3-phosphate + H(+). This Arabidopsis thaliana (Mouse-ear cress) protein is Glycerophosphodiester phosphodiesterase GDPD2.